The chain runs to 442 residues: MSGLAYLDLPAARLARGEVALPGSKSISNRVLLLAALAEGSTEITGLLDSDDTRVMLAALRQLGVSVGEVADGCVTIEGVARFPIEQAELFLGNAGTAFRPLTAALALMGGDYRLSGVPRMHERPIGDLVDALRQFGAGIEYLGQAGYPPLRIGGGSIRVDGPVRVEGSVSSQFLTALLMAAPVLARRSGQDITIEVVGELISKPYIEITLNLMARFGVSVRRDGWRAFTIARDAAYRGPGRMAIEGDASTASYFLALGAIGGGPVRVTGVGEDSIQGDVAFAATLAAMGADVRYGPGWIETRGVRVAEGGRLKAFDADFNLIPDAAMTAATLALYADGPCRLRNIGSWRVKETDRIHAMHTELEKLGAGVQSGADWLEVAPPAPGGWRDAHIGTWDDHRMAMCFSLAAFGPAAVRILDPGCVSKTFPDYFDVYAGLLAARD.

Lys-25, Ser-26, and Arg-30 together coordinate 3-phosphoshikimate. Lys-25 lines the phosphoenolpyruvate pocket. 2 residues coordinate phosphoenolpyruvate: Gly-96 and Arg-124. Residues Ser-171, Ser-172, Gln-173, Ser-203, Asp-325, and Lys-352 each contribute to the 3-phosphoshikimate site. Gln-173 serves as a coordination point for phosphoenolpyruvate. The active-site Proton acceptor is Asp-325. Phosphoenolpyruvate contacts are provided by Arg-356, Arg-400, and Lys-425.

Belongs to the EPSP synthase family. Monomer.

It localises to the cytoplasm. It carries out the reaction 3-phosphoshikimate + phosphoenolpyruvate = 5-O-(1-carboxyvinyl)-3-phosphoshikimate + phosphate. Its pathway is metabolic intermediate biosynthesis; chorismate biosynthesis; chorismate from D-erythrose 4-phosphate and phosphoenolpyruvate: step 6/7. Catalyzes the transfer of the enolpyruvyl moiety of phosphoenolpyruvate (PEP) to the 5-hydroxyl of shikimate-3-phosphate (S3P) to produce enolpyruvyl shikimate-3-phosphate and inorganic phosphate. The polypeptide is 3-phosphoshikimate 1-carboxyvinyltransferase (Bordetella parapertussis (strain 12822 / ATCC BAA-587 / NCTC 13253)).